Consider the following 504-residue polypeptide: Anaerobic nitric oxide reductase transcription regulator NorR (504 aa).

At Asp57 the chain carries 4-aspartylphosphate. In terms of domain architecture, Sigma-54 factor interaction spans 187–416 (MIGLSPGMMQ…LEHAIHRAVV (230 aa)). ATP is bound by residues 215 to 222 (GETGTGKE) and 278 to 287 (ADNGTLFLDE). Residues 479–498 (WAACARALEMDVANLHRLAK) constitute a DNA-binding region (H-T-H motif).

The protein operates within nitrogen metabolism; nitric oxide reduction. In terms of biological role, required for the expression of anaerobic nitric oxide (NO) reductase, acts as a transcriptional activator for at least the norVW operon. Activation also requires sigma-54. The chain is Anaerobic nitric oxide reductase transcription regulator NorR from Enterobacter sp. (strain 638).